A 323-amino-acid polypeptide reads, in one-letter code: MIDFGNFYQLIAKNNLQHWLNCLPAQLQEWQKAALHGNFKSWVKTLENLPEISPTQLDLKNGVIAERDPPLSAGEKICLTNILRIFMPWRKGPFSLYGINIDTEWRSDWKWDRVLPHISPLTGRTILDVGCGSGYHLWRMVGEGAELAVGIDPTQLFLCQFEAVRKLLGNDQRAHLLPLGIEQLPALAAFDTVFSMGVLYHRRSPLDHLWQLKNQLISDGELILESLVVEGDEHTCLIPGERYAQMRNVYFIPSAKMVKIWLEKCGFVDVKIVDQAVTATEEQRRTDWMKTESLSDFLDPTDSNKTIEGYPAPLRAILIARKP.

Carboxy-S-adenosyl-L-methionine is bound by residues Lys-91, Trp-105, Lys-110, Gly-130, 152–154 (DPT), 181–182 (IE), Met-196, Tyr-200, and Arg-315.

Belongs to the class I-like SAM-binding methyltransferase superfamily. CmoB family. Homotetramer.

It carries out the reaction carboxy-S-adenosyl-L-methionine + 5-hydroxyuridine(34) in tRNA = 5-carboxymethoxyuridine(34) in tRNA + S-adenosyl-L-homocysteine + H(+). Its function is as follows. Catalyzes carboxymethyl transfer from carboxy-S-adenosyl-L-methionine (Cx-SAM) to 5-hydroxyuridine (ho5U) to form 5-carboxymethoxyuridine (cmo5U) at position 34 in tRNAs. The protein is tRNA U34 carboxymethyltransferase of Photorhabdus laumondii subsp. laumondii (strain DSM 15139 / CIP 105565 / TT01) (Photorhabdus luminescens subsp. laumondii).